A 425-amino-acid chain; its full sequence is Enolase (425 aa).

Glutamine 163 contributes to the (2R)-2-phosphoglycerate binding site. Glutamate 205 (proton donor) is an active-site residue. Mg(2+) contacts are provided by aspartate 242, glutamate 286, and aspartate 313. Residues lysine 338, arginine 367, serine 368, and lysine 389 each contribute to the (2R)-2-phosphoglycerate site. Lysine 338 (proton acceptor) is an active-site residue.

It belongs to the enolase family. Mg(2+) serves as cofactor.

Its subcellular location is the cytoplasm. The protein resides in the secreted. The protein localises to the cell surface. The catalysed reaction is (2R)-2-phosphoglycerate = phosphoenolpyruvate + H2O. The protein operates within carbohydrate degradation; glycolysis; pyruvate from D-glyceraldehyde 3-phosphate: step 4/5. Its function is as follows. Catalyzes the reversible conversion of 2-phosphoglycerate (2-PG) into phosphoenolpyruvate (PEP). It is essential for the degradation of carbohydrates via glycolysis. In Lactobacillus delbrueckii subsp. bulgaricus (strain ATCC 11842 / DSM 20081 / BCRC 10696 / JCM 1002 / NBRC 13953 / NCIMB 11778 / NCTC 12712 / WDCM 00102 / Lb 14), this protein is Enolase.